We begin with the raw amino-acid sequence, 300 residues long: Ribosomal protein L11 methyltransferase (300 aa).

S-adenosyl-L-methionine is bound by residues threonine 152, glycine 173, aspartate 195, and asparagine 234.

It belongs to the methyltransferase superfamily. PrmA family.

Its subcellular location is the cytoplasm. The enzyme catalyses L-lysyl-[protein] + 3 S-adenosyl-L-methionine = N(6),N(6),N(6)-trimethyl-L-lysyl-[protein] + 3 S-adenosyl-L-homocysteine + 3 H(+). Methylates ribosomal protein L11. In Burkholderia vietnamiensis (strain G4 / LMG 22486) (Burkholderia cepacia (strain R1808)), this protein is Ribosomal protein L11 methyltransferase.